A 36-amino-acid polypeptide reads, in one-letter code: Gloverin (36 aa).

It is found in the secreted. Its function is as follows. Antibacterial protein. This Heliothis virescens (Tobacco budworm moth) protein is Gloverin.